We begin with the raw amino-acid sequence, 233 residues long: Preprocaerulein type-4 (233 aa).

Residues 1–26 form the signal peptide; that stretch reads MFKGILLCVLFAVLSANPLSQPEGFA. Residues 27-72 constitute a propeptide that is removed on maturation; it reads DEERDVRGLASLLGKALKATLKIGTHFLGGAPQQREANDERRFADG. Gln-73 bears the Pyrrolidone carboxylic acid mark. Sulfotyrosine is present on Tyr-76. Phe-82 is modified (phenylalanine amide). Positions 86-87 are excised as a propeptide; that stretch reads DG. The residue at position 88 (Gln-88) is a Pyrrolidone carboxylic acid. Sulfotyrosine is present on Tyr-91. Position 97 is a phenylalanine amide (Phe-97). Residues 101 to 151 constitute a propeptide that is removed on maturation; sequence DDEDDVHERDVRGFGSFLGKALKAALKIGANALGGAPQQREANDERRFADG. Position 152 is a pyrrolidone carboxylic acid (Gln-152). Tyr-155 is subject to Sulfotyrosine. The residue at position 161 (Phe-161) is a Phenylalanine amide. Residues 165-215 constitute a propeptide that is removed on maturation; it reads DDEDDVNERDVRGFGSFLGKALKAALKIGANALGGSPQQREANDERRFADG. Residues 197–233 form a disordered region; it reads LGGSPQQREANDERRFADGQQDYTGWMDFGRRNGEDD. At Gln-216 the chain carries Pyrrolidone carboxylic acid. Sulfotyrosine is present on Tyr-219. At Phe-225 the chain carries Phenylalanine amide. The propeptide occupies 229-233; that stretch reads NGEDD.

Belongs to the gastrin/cholecystokinin family. Expressed by the skin glands.

The protein localises to the secreted. Functionally, the pharmacological activities of caerulein are quite similar to the physiological activities of gastrin and related peptides. This is Preprocaerulein type-4 from Xenopus laevis (African clawed frog).